The sequence spans 262 residues: Hemin import ATP-binding protein HmuV (262 aa).

Residues 1–247 form the ABC transporter domain; it reads MRNLTLQRGR…ERIKQIFAFD (247 aa). 31-38 contributes to the ATP binding site; it reads GPNGTGKS.

Belongs to the ABC transporter superfamily. Heme (hemin) importer (TC 3.A.1.14.5) family. In terms of assembly, the complex is composed of two ATP-binding proteins (HmuV), two transmembrane proteins (HmuU) and a solute-binding protein (HmuT).

The protein resides in the cell inner membrane. Part of the ABC transporter complex HmuTUV involved in hemin import. Responsible for energy coupling to the transport system. The polypeptide is Hemin import ATP-binding protein HmuV (Plesiomonas shigelloides (Aeromonas shigelloides)).